A 122-amino-acid chain; its full sequence is Large ribosomal subunit protein uL18 (122 aa).

This sequence belongs to the universal ribosomal protein uL18 family. In terms of assembly, part of the 50S ribosomal subunit; part of the 5S rRNA/L5/L18/L25 subcomplex. Contacts the 5S and 23S rRNAs.

Its function is as follows. This is one of the proteins that bind and probably mediate the attachment of the 5S RNA into the large ribosomal subunit, where it forms part of the central protuberance. In Prochlorococcus marinus (strain AS9601), this protein is Large ribosomal subunit protein uL18.